Here is a 130-residue protein sequence, read N- to C-terminus: Small ribosomal subunit protein uS8 (130 aa).

The protein belongs to the universal ribosomal protein uS8 family. In terms of assembly, part of the 30S ribosomal subunit.

Its function is as follows. One of the primary rRNA binding proteins, it binds directly to 16S rRNA central domain where it helps coordinate assembly of the platform of the 30S subunit. This Methanosarcina mazei (strain ATCC BAA-159 / DSM 3647 / Goe1 / Go1 / JCM 11833 / OCM 88) (Methanosarcina frisia) protein is Small ribosomal subunit protein uS8.